Consider the following 574-residue polypeptide: Septation ring formation regulator EzrA (574 aa).

At 1–7 (MSIGLVI) the chain is on the extracellular side. Residues 8 to 26 (LVAVVALLLVVGYGTAVLM) form a helical membrane-spanning segment. Coiled-coil stretches lie at residues 26 to 47 (MRKR…LYNL), 105 to 189 (KAKH…QFVT), 258 to 346 (ESRF…FLIS), 375 to 415 (SETK…IEKD), and 455 to 494 (STSN…LEEE). Topologically, residues 27 to 574 (RKRNEALLQN…YEKTRENIRF (548 aa)) are cytoplasmic.

The protein belongs to the EzrA family.

The protein resides in the cell membrane. In terms of biological role, negative regulator of FtsZ ring formation; modulates the frequency and position of FtsZ ring formation. Inhibits FtsZ ring formation at polar sites. Interacts either with FtsZ or with one of its binding partners to promote depolymerization. This is Septation ring formation regulator EzrA from Streptococcus sanguinis (strain SK36).